The sequence spans 309 residues: D-allose kinase (309 aa).

ATP-binding positions include 10 to 17 (GVDMGATH) and 142 to 149 (GMGFAVWM).

The protein belongs to the ROK (NagC/XylR) family.

The catalysed reaction is D-allose + ATP = D-allose 6-phosphate + ADP + H(+). Its pathway is carbohydrate degradation; D-allose degradation. In terms of biological role, catalyzes the phosphorylation of D-allose to D-allose 6-phosphate. Also has low level glucokinase activity in vitro. The chain is D-allose kinase from Escherichia coli (strain K12).